We begin with the raw amino-acid sequence, 352 residues long: Trifunctional sesterterpene/triterpene/sesquarterpene synthase (352 aa).

Belongs to the large terpene synthase family.

It carries out the reaction (2E,6E,10E,14E)-geranylfarnesyl diphosphate = beta-geranylfarnesene + diphosphate. It catalyses the reaction all-trans-hexaprenyl diphosphate = beta-hexaprene + diphosphate. The catalysed reaction is all-trans-heptaprenyl diphosphate = beta-heptaprene + diphosphate. Its function is as follows. Catalyzes the conversion of geranylfarnesyl diphosphate (GFPP) and hexaprenyl diphosphate (HexPP) into beta-geranylfarnesene and beta-hexaprene, respectively. Also produces beta-heptaprene from heptaprenyl diphosphate (HepPP) as a minor product. This Shouchella clausii (Alkalihalobacillus clausii) protein is Trifunctional sesterterpene/triterpene/sesquarterpene synthase.